The primary structure comprises 410 residues: Probable serine/threonine-protein kinase PBL8 (410 aa).

The span at 1-10 (MGNCGTRDEA) shows a compositional bias: basic and acidic residues. A disordered region spans residues 1–45 (MGNCGTRDEAAVFTPQAQAQQLQKKHSRSVSDLSDPSTPRFRDDS). Glycine 2 is lipidated: N-myristoyl glycine. Cysteine 4 carries the S-palmitoyl cysteine lipid modification. Phosphothreonine is present on threonine 58. Residues 69–350 (FRPDYILGEG…DVVETLEPLQ (282 aa)) enclose the Protein kinase domain. Residues 75–83 (LGEGGFGTV) and lysine 104 each bind ATP. Phosphotyrosine is present on tyrosine 149. Aspartate 199 (proton acceptor) is an active-site residue. Serine 203 and serine 233 each carry phosphoserine. Threonine 234 and threonine 239 each carry phosphothreonine. Residue tyrosine 247 is modified to Phosphotyrosine.

This sequence belongs to the protein kinase superfamily. Ser/Thr protein kinase family. In terms of assembly, interacts with the Xanthomonas campestris effector XopAC/AvrAC.

It is found in the cell membrane. The enzyme catalyses L-seryl-[protein] + ATP = O-phospho-L-seryl-[protein] + ADP + H(+). The catalysed reaction is L-threonyl-[protein] + ATP = O-phospho-L-threonyl-[protein] + ADP + H(+). In terms of biological role, may be involved in plant defense signaling. The sequence is that of Probable serine/threonine-protein kinase PBL8 from Arabidopsis thaliana (Mouse-ear cress).